Consider the following 761-residue polypeptide: MKTWLKTVFGVTTLAALALVVICIVLRPSRVYKPEGNTKRALTLKDILNGTFSYKTYFPNWISEQEYLHQSEDDNIVFYNIETRESYIILSNSTMKSVNATDYGLSPDRQFVYLESDYSKLWRYSYTATYYIYDLQNGEFVRGYELPRPIQYLCWSPVGSKLAYVYQNNIYLKQRPGDPPFQITYTGRENRIFNGIPDWVYEEEMLATKYALWWSPDGKFLAYVEFNDSDIPIIAYSYYGDGQYPRTINIPYPKAGAKNPVVRVFIVDTTYPHHVGPMEVPVPEMIASSDYYFSWLTWVSSERVCLQWLKRVQNVSVLSICDFREDWHAWECPKNQEHVEESRTGWAGGFFVSTPAFSQDATSYYKIFSDKDGYKHIHYIKDTVENAIQITSGKWEAIYIFRVTQDSLFYSSNEFEGYPGRRNIYRISIGNSPPSKKCVTCHLRKERCQYYTASFSYKAKYYALVCYGPGLPISTLHDGRTDQEIQVLEENKELENSLRNIQLPKVEIKKLKDGGLTFWYKMILPPQFDRSKKYPLLIQVYGGPCSQSVKSVFAVNWITYLASKEGIVIALVDGRGTAFQGDKFLHAVYRKLGVYEVEDQLTAVRKFIEMGFIDEERIAIWGWSYGGYVSSLALASGTGLFKCGIAVAPVSSWEYYASIYSERFMGLPTKDDNLEHYKNSTVMARAEYFRNVDYLLIHGTADDNVHFQNSAQIAKALVNAQVDFQAMWYSDQNHGISSGRSQNHLYTHMTHFLKQCFSLSD.

Residues 1 to 4 (MKTW) lie on the Cytoplasmic side of the membrane. A helical; Signal-anchor for type II membrane protein transmembrane segment spans residues 5-25 (LKTVFGVTTLAALALVVICIV). Over 26–761 (LRPSRVYKPE…FLKQCFSLSD (736 aa)) the chain is Extracellular. 3 N-linked (GlcNAc...) asparagine glycosylation sites follow: Asn-49, Asn-92, and Asn-99. Positions 203 and 204 each coordinate substrate. Asn-227 and Asn-314 each carry an N-linked (GlcNAc...) asparagine glycan. Intrachain disulfides connect Cys-321–Cys-332, Cys-438–Cys-441, and Cys-448–Cys-466. The active-site Charge relay system is the Ser-624. Cys-643 and Cys-756 are oxidised to a cystine. N-linked (GlcNAc...) asparagine glycosylation occurs at Asn-679. Catalysis depends on charge relay system residues Asp-702 and His-734.

It belongs to the peptidase S9B family. Homodimer; homodimerization is required for activity of both plasma membrane and soluble forms. The monomer is inactive. Heterodimer with DPP4. Interacts with PLAUR; the interaction occurs at the cell surface of invadopodia membranes. Interacts with ITGB1. Interacts with ITGA3. Associates with integrin alpha-3/beta-1; the association occurs in a collagen-dependent manner at the cell surface of invadopodia membranes. In terms of processing, N-glycosylated. Post-translationally, the N-terminus may be blocked. Expressed strongly in uterus, pancreas, submaxillary gland and skin, less in lymph node, ovary, skeletal muscle, adrenal and bone marrow. Expressed in reactive stromal fibroblast in epithelial cancers. Expressed in melanocytes but not melanomas (at protein level). Detected in fibroblasts, in placenta, uterus, embryos from day 7-19 and in newborn mice (P1).

The protein localises to the cell surface. It localises to the cell membrane. The protein resides in the cell projection. Its subcellular location is the lamellipodium membrane. It is found in the invadopodium membrane. The protein localises to the ruffle membrane. It localises to the membrane. The protein resides in the secreted. The enzyme catalyses Hydrolysis of Pro-|-Xaa &gt;&gt; Ala-|-Xaa in oligopeptides.. It carries out the reaction Release of an N-terminal dipeptide, Xaa-Yaa-|-Zaa-, from a polypeptide, preferentially when Yaa is Pro, provided Zaa is neither Pro nor hydroxyproline.. With respect to regulation, gelatinase activity is inhibited by serine-protease inhibitors, such as phenylmethylsulfonyl fluoride (PMSF), 4-(2-aminoethyl)-benzenesulfonyl fluoride hydrochloride (AEBSF), 4-amidino phenylsulfonyl fluoride (APSF) and diisopropyl fluorophosphate (DFP), N-ethylmaleimide (NEM) and phenylmethylsulfonyl fluoride (PMSF). Dipeptidyl peptidase activity is inhibited by 2,2'-azino-bis(3-ethylbenzthiazoline-6-sulfonic acid), diisopropylfluorophosphate (DFP). Prolyl endopeptidase activity is inhibited by the boronic acid peptide Ac-Gly-BoroPro, Ac-Gly-Pro-chloromethyl ketone and Thr-Ser-Gly-chloromethyl ketone. In terms of biological role, cell surface glycoprotein serine protease that participates in extracellular matrix degradation and involved in many cellular processes including tissue remodeling, fibrosis, wound healing, inflammation and tumor growth. Both plasma membrane and soluble forms exhibit post-proline cleaving endopeptidase activity, with a marked preference for Ala/Ser-Gly-Pro-Ser/Asn/Ala consensus sequences, on substrate such as alpha-2-antiplasmin SERPINF2 and SPRY2. Degrade also gelatin, heat-denatured type I collagen, but not native collagen type I and IV, vibronectin, tenascin, laminin, fibronectin, fibrin or casein. Also has dipeptidyl peptidase activity, exhibiting the ability to hydrolyze the prolyl bond two residues from the N-terminus of synthetic dipeptide substrates provided that the penultimate residue is proline, with a preference for Ala-Pro, Ile-Pro, Gly-Pro, Arg-Pro and Pro-Pro. Natural neuropeptide hormones for dipeptidyl peptidase are the neuropeptide Y (NPY), peptide YY (PYY), substance P (TAC1) and brain natriuretic peptide 32 (NPPB). The plasma membrane form, in association with either DPP4, PLAUR or integrins, is involved in the pericellular proteolysis of the extracellular matrix (ECM), and hence promotes cell adhesion, migration and invasion through the ECM. Plays a role in tissue remodeling during development and wound healing. Participates in the cell invasiveness towards the ECM in malignant melanoma cancers. Enhances tumor growth progression by increasing angiogenesis, collagen fiber degradation and apoptosis and by reducing antitumor response of the immune system. Promotes glioma cell invasion through the brain parenchyma by degrading the proteoglycan brevican. Acts as a tumor suppressor in melanocytic cells through regulation of cell proliferation and survival in a serine protease activity-independent manner. In Mus musculus (Mouse), this protein is Prolyl endopeptidase FAP.